Consider the following 197-residue polypeptide: Ribonuclease HII (197 aa).

An RNase H type-2 domain is found at 10-197; sequence ELIAGVDEVG…APVRKLLNTL (188 aa). A divalent metal cation-binding residues include Asp16, Glu17, and Asp108.

This sequence belongs to the RNase HII family. It depends on Mn(2+) as a cofactor. Mg(2+) serves as cofactor.

The protein localises to the cytoplasm. The enzyme catalyses Endonucleolytic cleavage to 5'-phosphomonoester.. In terms of biological role, endonuclease that specifically degrades the RNA of RNA-DNA hybrids. The protein is Ribonuclease HII (rnhB) of Pasteurella multocida (strain Pm70).